A 370-amino-acid chain; its full sequence is Apolipoprotein A-V (370 aa).

The N-terminal stretch at 1–21 is a signal peptide; sequence MASMIALLTWALALLPALASA. Ser59 is subject to Phosphoserine.

This sequence belongs to the apolipoprotein A1/A4/E family. Interacts with GPIHBP1. Interacts with SORL1; this interaction leads to APOA5 internalization and sorting either to lysosomes and degradation, or to the trans-Golgi network.

The protein localises to the secreted. Its subcellular location is the early endosome. It is found in the late endosome. The protein resides in the golgi apparatus. It localises to the trans-Golgi network. Minor apolipoprotein mainly associated with HDL and to a lesser extent with VLDL. May also be associated with chylomicrons. Important determinant of plasma triglyceride (TG) levels by both being a potent stimulator of apo-CII lipoprotein lipase (LPL) TG hydrolysis and an inhibitor of the hepatic VLDL-TG production rate (without affecting the VLDL-apoB production rate). Activates poorly lecithin:cholesterol acyltransferase (LCAT) and does not enhance efflux of cholesterol from macrophages. Binds heparin. In Acinonyx jubatus (Cheetah), this protein is Apolipoprotein A-V (APOA5).